The sequence spans 338 residues: UDP-glucose 4-epimerase (338 aa).

NAD(+) is bound by residues 11–12 (YI), 31–36 (DNLCNS), 58–59 (DI), 80–84 (FAGLK), Asn-99, Ser-124, Tyr-149, Lys-153, and Phe-178. Residues Ser-124 and Tyr-149 each coordinate substrate. Tyr-149 (proton acceptor) is an active-site residue. Substrate is bound by residues Asn-179, 199 to 200 (NL), 216 to 218 (AIF), Arg-231, 292 to 295 (REGD), and Tyr-299.

Belongs to the NAD(P)-dependent epimerase/dehydratase family. As to quaternary structure, homodimer. The cofactor is NAD(+).

The catalysed reaction is UDP-alpha-D-glucose = UDP-alpha-D-galactose. Its pathway is carbohydrate metabolism; galactose metabolism. Involved in the metabolism of galactose. Catalyzes the conversion of UDP-galactose (UDP-Gal) to UDP-glucose (UDP-Glc) through a mechanism involving the transient reduction of NAD. The chain is UDP-glucose 4-epimerase (galE) from Yersinia pestis.